Consider the following 172-residue polypeptide: Early E3 18.5 kDa glycoprotein (172 aa).

An N-terminal signal peptide occupies residues 1–19; the sequence is MGAILVVLALLSLLGLGSA. The Lumenal portion of the chain corresponds to 20 to 136; the sequence is NLNPLDHDPC…SKENIVAFSI (117 aa). Residue Asn36 is glycosylated (N-linked (GlcNAc...) asparagine; by host). Intrachain disulfides connect Cys37–Cys55 and Cys49–Cys111. Asn68, Asn72, and Asn102 each carry an N-linked (GlcNAc...) asparagine; by host glycan. A helical membrane pass occupies residues 137 to 157; it reads AYCLVTCIITAIICVCIHLLI. At 158 to 172 the chain is on the cytoplasmic side; sequence VIRPRQSNEEKEKMP. A Di-lysine motif motif is present at residues 168 to 172; the sequence is KEKMP.

The protein belongs to the adenoviridae E19 family. In terms of processing, both disulfide bonds are absolutely critical for the interaction with MHC antigens. Post-translationally, N-glycosylated; high-mannose.

It is found in the host endoplasmic reticulum membrane. Binds and retains class I heavy chains in the endoplasmic reticulum during the early period of virus infection, thereby impairing their transport to the cell surface. Also delays the expression of class I alleles that it cannot affect by direct retention. Binds transporters associated with antigen processing (TAP) and acts as a tapasin inhibitor, preventing class I/TAP association. In consequence, infected cells are masked for immune recognition by cytotoxic T-lymphocytes. The sequence is that of Early E3 18.5 kDa glycoprotein from Human adenovirus B serotype 3 (HAdV-3).